Reading from the N-terminus, the 100-residue chain is Small ribosomal subunit protein bS20 (100 aa).

Residues 1–18 are compositionally biased toward basic and acidic residues; the sequence is MPNKKSAEKRVRQSEQRR. Residues 1–26 form a disordered region; that stretch reads MPNKKSAEKRVRQSEQRRQKNRGYQK.

This sequence belongs to the bacterial ribosomal protein bS20 family.

In terms of biological role, binds directly to 16S ribosomal RNA. The sequence is that of Small ribosomal subunit protein bS20 from Petrotoga mobilis (strain DSM 10674 / SJ95).